The chain runs to 272 residues: HMP-PP phosphatase (272 aa).

Aspartate 8 (nucleophile) is an active-site residue. The Mg(2+) site is built by aspartate 8, aspartate 10, and aspartate 212.

This sequence belongs to the HAD-like hydrolase superfamily. Cof family. Requires Mg(2+) as cofactor.

The enzyme catalyses 4-amino-2-methyl-5-(diphosphooxymethyl)pyrimidine + H2O = 4-amino-2-methyl-5-(phosphooxymethyl)pyrimidine + phosphate + H(+). In terms of biological role, catalyzes the hydrolysis of 4-amino-2-methyl-5-hydroxymethylpyrimidine pyrophosphate (HMP-PP) to 4-amino-2-methyl-5-hydroxymethylpyrimidine phosphate (HMP-P). This Salmonella choleraesuis (strain SC-B67) protein is HMP-PP phosphatase.